Reading from the N-terminus, the 398-residue chain is Dual specificity mitogen-activated protein kinase kinase 2 (398 aa).

The interval 1-29 (MPAKRKPVLPALTITPSPAEGPGPGGSAE) is disordered. The region spanning 70-367 (FERISELGAG…LKMLMNHTFI (298 aa)) is the Protein kinase domain. Residues 76–84 (LGAGNGGVV) and Lys-99 contribute to the ATP site. The active-site Proton acceptor is the Asp-192. 2 positions are modified to phosphoserine; by RAF: Ser-220 and Ser-224.

Belongs to the protein kinase superfamily. STE Ser/Thr protein kinase family. MAP kinase kinase subfamily. In terms of processing, activated by phosphorylation on Ser/Thr catalyzed by MAP kinase kinase kinases (RAF).

The enzyme catalyses L-seryl-[protein] + ATP = O-phospho-L-seryl-[protein] + ADP + H(+). It catalyses the reaction L-threonyl-[protein] + ATP = O-phospho-L-threonyl-[protein] + ADP + H(+). The catalysed reaction is L-tyrosyl-[protein] + ATP = O-phospho-L-tyrosyl-[protein] + ADP + H(+). Its function is as follows. Catalyzes the concomitant phosphorylation of a threonine and a tyrosine residue in a Thr-Glu-Tyr sequence located in MAP kinases. Activates the ERK1 and ERK2 MAP kinases. In Gallus gallus (Chicken), this protein is Dual specificity mitogen-activated protein kinase kinase 2 (MAP2K2).